Here is a 271-residue protein sequence, read N- to C-terminus: Metal-staphylopine import system ATP-binding protein CntD (271 aa).

One can recognise an ABC transporter domain in the interval 6-251 (VKHLTITDTW…PEHVYTKYLL (246 aa)). 38-45 (GESGSGKS) serves as a coordination point for ATP.

Belongs to the ABC transporter superfamily. As to quaternary structure, the complex is composed of two ATP-binding proteins (CntD and CntF), two transmembrane proteins (CntB and CntC) and a solute-binding protein (CntA).

The protein resides in the cell membrane. With respect to regulation, nickel/cobalt import is reduced in the presence of zinc. Its function is as follows. Part of the ABC transporter complex CntABCDF (Opp1) involved in the uptake of metal in complex with the metallophore staphylopine (StP). Involved in the import of divalent metals ions such as nickel, cobalt and zinc. Probably responsible for energy coupling to the transport system. Plays a major role in nickel/cobalt import in zinc-depleted conditions. Contributes to virulence. Required for full urease activity in vitro. In Staphylococcus aureus (strain NCTC 8325 / PS 47), this protein is Metal-staphylopine import system ATP-binding protein CntD.